Consider the following 171-residue polypeptide: Putative ankyrin repeat protein PA3287 (171 aa).

ANK repeat units lie at residues 48 to 77 (KGDSLLMLASYHGHADTVRLLLAYKADPDL), 81 to 110 (AGQTPLAGAAFKGDLAMVELLLAGGADVEG), and 114 to 143 (DGKTALMMAAMFNQAEVAASLLAHGARRDA).

The sequence is that of Putative ankyrin repeat protein PA3287 from Pseudomonas aeruginosa (strain ATCC 15692 / DSM 22644 / CIP 104116 / JCM 14847 / LMG 12228 / 1C / PRS 101 / PAO1).